Here is a 436-residue protein sequence, read N- to C-terminus: Ribulose bisphosphate carboxylase large chain (436 aa).

Residues Asn104 and Thr154 each contribute to the substrate site. The active-site Proton acceptor is Lys156. Lys158 lines the substrate pocket. Residues Lys182, Asp184, and Glu185 each coordinate Mg(2+). Lys182 is modified (N6-carboxylysine). Catalysis depends on His275, which acts as the Proton acceptor. Substrate-binding residues include Arg276, His308, and Ser360.

The protein belongs to the RuBisCO large chain family. Type I subfamily. Heterohexadecamer of 8 large chains and 8 small chains. Mg(2+) serves as cofactor.

It localises to the plastid. It is found in the chloroplast. The catalysed reaction is 2 (2R)-3-phosphoglycerate + 2 H(+) = D-ribulose 1,5-bisphosphate + CO2 + H2O. The enzyme catalyses D-ribulose 1,5-bisphosphate + O2 = 2-phosphoglycolate + (2R)-3-phosphoglycerate + 2 H(+). Its function is as follows. RuBisCO catalyzes two reactions: the carboxylation of D-ribulose 1,5-bisphosphate, the primary event in carbon dioxide fixation, as well as the oxidative fragmentation of the pentose substrate in the photorespiration process. Both reactions occur simultaneously and in competition at the same active site. This Euglena viridis (Cercaria viridis) protein is Ribulose bisphosphate carboxylase large chain.